The primary structure comprises 108 residues: Small ribosomal subunit protein eS25w (108 aa).

The segment at Met-1 to Lys-36 is disordered. The segment covering Lys-22–Gly-31 has biased composition (basic residues).

It belongs to the eukaryotic ribosomal protein eS25 family.

This Arabidopsis thaliana (Mouse-ear cress) protein is Small ribosomal subunit protein eS25w (RPS25E).